A 209-amino-acid polypeptide reads, in one-letter code: Probable glutathione peroxidase 8 (209 aa).

Met-1 is subject to N-acetylmethionine. The helical transmembrane segment at 18–40 (IFAVLLSMVLCTVMLFLLQLKFL) threads the bilayer. Cys-79 is a catalytic residue.

The protein belongs to the glutathione peroxidase family.

The protein resides in the membrane. The enzyme catalyses 2 glutathione + H2O2 = glutathione disulfide + 2 H2O. In Mus musculus (Mouse), this protein is Probable glutathione peroxidase 8 (Gpx8).